Here is a 292-residue protein sequence, read N- to C-terminus: Elongation factor Ts (292 aa).

The tract at residues 79–82 (TDFV) is involved in Mg(2+) ion dislocation from EF-Tu.

It belongs to the EF-Ts family.

Its subcellular location is the cytoplasm. In terms of biological role, associates with the EF-Tu.GDP complex and induces the exchange of GDP to GTP. It remains bound to the aminoacyl-tRNA.EF-Tu.GTP complex up to the GTP hydrolysis stage on the ribosome. The chain is Elongation factor Ts from Metamycoplasma arthritidis (strain 158L3-1) (Mycoplasma arthritidis).